A 715-amino-acid chain; its full sequence is Fatty acid oxidation complex subunit alpha (715 aa).

Positions 1 to 190 are enoyl-CoA hydratase/isomerase; sequence MIYEGKAITV…KVGAVDAVVA (190 aa). Aspartate 297 is a substrate binding site. Positions 312-715 are 3-hydroxyacyl-CoA dehydrogenase; that stretch reads KDVKQAAVLG…MAKNGQSFFG (404 aa). NAD(+) contacts are provided by residues methionine 325, aspartate 344, 401-403, lysine 408, and serine 430; that span reads VVE. Histidine 451 functions as the For 3-hydroxyacyl-CoA dehydrogenase activity in the catalytic mechanism. Asparagine 454 provides a ligand contact to NAD(+). Asparagine 501 and tyrosine 660 together coordinate substrate.

It in the N-terminal section; belongs to the enoyl-CoA hydratase/isomerase family. This sequence in the C-terminal section; belongs to the 3-hydroxyacyl-CoA dehydrogenase family. Heterotetramer of two alpha chains (FadB) and two beta chains (FadA).

The catalysed reaction is a (3S)-3-hydroxyacyl-CoA + NAD(+) = a 3-oxoacyl-CoA + NADH + H(+). It catalyses the reaction a (3S)-3-hydroxyacyl-CoA = a (2E)-enoyl-CoA + H2O. It carries out the reaction a 4-saturated-(3S)-3-hydroxyacyl-CoA = a (3E)-enoyl-CoA + H2O. The enzyme catalyses (3S)-3-hydroxybutanoyl-CoA = (3R)-3-hydroxybutanoyl-CoA. The catalysed reaction is a (3Z)-enoyl-CoA = a 4-saturated (2E)-enoyl-CoA. It catalyses the reaction a (3E)-enoyl-CoA = a 4-saturated (2E)-enoyl-CoA. It functions in the pathway lipid metabolism; fatty acid beta-oxidation. In terms of biological role, involved in the aerobic and anaerobic degradation of long-chain fatty acids via beta-oxidation cycle. Catalyzes the formation of 3-oxoacyl-CoA from enoyl-CoA via L-3-hydroxyacyl-CoA. It can also use D-3-hydroxyacyl-CoA and cis-3-enoyl-CoA as substrate. In Pseudomonas fluorescens (strain ATCC BAA-477 / NRRL B-23932 / Pf-5), this protein is Fatty acid oxidation complex subunit alpha.